We begin with the raw amino-acid sequence, 308 residues long: Cytochrome b (308 aa).

4 consecutive transmembrane segments (helical) span residues 1-21 (SGSL…FLAA), 45-66 (WLIR…YLHI), 81-101 (WNIG…GYVL), and 146-166 (FFAL…VHLT). Heme b-binding residues include histidine 51 and histidine 65. Positions 150 and 164 each coordinate heme b. Histidine 169 is an a ubiquinone binding site. Helical transmembrane passes span 194–214 (TKDV…ALFS), 256–276 (LGGV…PLLH), and 288–308 (LSQI…WVGS).

This sequence belongs to the cytochrome b family. As to quaternary structure, the cytochrome bc1 complex contains 11 subunits: 3 respiratory subunits (MT-CYB, CYC1 and UQCRFS1), 2 core proteins (UQCRC1 and UQCRC2) and 6 low-molecular weight proteins (UQCRH/QCR6, UQCRB/QCR7, UQCRQ/QCR8, UQCR10/QCR9, UQCR11/QCR10 and a cleavage product of UQCRFS1). This cytochrome bc1 complex then forms a dimer. The cofactor is heme b.

It is found in the mitochondrion inner membrane. In terms of biological role, component of the ubiquinol-cytochrome c reductase complex (complex III or cytochrome b-c1 complex) that is part of the mitochondrial respiratory chain. The b-c1 complex mediates electron transfer from ubiquinol to cytochrome c. Contributes to the generation of a proton gradient across the mitochondrial membrane that is then used for ATP synthesis. This Garritornis isidorei (Papuan babbler) protein is Cytochrome b (MT-CYB).